A 351-amino-acid polypeptide reads, in one-letter code: Porphobilinogen deaminase (351 aa).

Position 242 is an S-(dipyrrolylmethanemethyl)cysteine (Cys242).

Belongs to the HMBS family. As to quaternary structure, monomer. Requires dipyrromethane as cofactor.

It carries out the reaction 4 porphobilinogen + H2O = hydroxymethylbilane + 4 NH4(+). The protein operates within porphyrin-containing compound metabolism; protoporphyrin-IX biosynthesis; coproporphyrinogen-III from 5-aminolevulinate: step 2/4. Its function is as follows. Tetrapolymerization of the monopyrrole PBG into the hydroxymethylbilane pre-uroporphyrinogen in several discrete steps. This is Porphobilinogen deaminase from Rickettsia peacockii (strain Rustic).